The primary structure comprises 172 residues: Large ribosomal subunit protein uL10 (172 aa).

Belongs to the universal ribosomal protein uL10 family. Part of the ribosomal stalk of the 50S ribosomal subunit. The N-terminus interacts with L11 and the large rRNA to form the base of the stalk. The C-terminus forms an elongated spine to which L12 dimers bind in a sequential fashion forming a multimeric L10(L12)X complex.

Forms part of the ribosomal stalk, playing a central role in the interaction of the ribosome with GTP-bound translation factors. The chain is Large ribosomal subunit protein uL10 (rplJ) from Liberibacter africanus (Citrus greening disease).